The following is a 539-amino-acid chain: G protein-coupled receptor associated sorting protein 3 (539 aa).

Over residues 1–10 (MTGSKNKARA) the composition is skewed to basic residues. Disordered regions lie at residues 1–112 (MTGS…NWFW) and 134–172 (VAKC…EENV). 2 stretches are compositionally biased toward basic and acidic residues: residues 66 to 80 (VVAE…ESKA) and 88 to 106 (FNHR…DKPS). A compositionally biased stretch (polar residues) spans 134–146 (VAKCENKPSTSIQ).

It belongs to the GPRASP family. As to quaternary structure, homodimer.

It localises to the cytoplasm. The protein resides in the nucleus. Functionally, survival and differentiation promoting protein that plays a role in the regulation of neurosynaptogenesis. Induces phosphatase PP2A activity which results in APP dephosphorylation and inhibits BACE1-mediated processing of APP. The sequence is that of G protein-coupled receptor associated sorting protein 3 (Gprasp3) from Mus musculus (Mouse).